A 441-amino-acid polypeptide reads, in one-letter code: Ribosomal protein uS12 methylthiotransferase RimO (441 aa).

The MTTase N-terminal domain maps to 7-117 (PKISFVSLGC…VLEAVHRALP (111 aa)). The [4Fe-4S] cluster site is built by C16, C52, C81, C148, C152, and C155. The 238-residue stretch at 134–371 (LTPRHYAYLK…MARQQKISAR (238 aa)) folds into the Radical SAM core domain. In terms of domain architecture, TRAM spans 374–440 (KRKVGTRQQV…AYDLHGTVAG (67 aa)).

It belongs to the methylthiotransferase family. RimO subfamily. [4Fe-4S] cluster serves as cofactor.

It localises to the cytoplasm. It catalyses the reaction L-aspartate(89)-[ribosomal protein uS12]-hydrogen + (sulfur carrier)-SH + AH2 + 2 S-adenosyl-L-methionine = 3-methylsulfanyl-L-aspartate(89)-[ribosomal protein uS12]-hydrogen + (sulfur carrier)-H + 5'-deoxyadenosine + L-methionine + A + S-adenosyl-L-homocysteine + 2 H(+). Catalyzes the methylthiolation of an aspartic acid residue of ribosomal protein uS12. The sequence is that of Ribosomal protein uS12 methylthiotransferase RimO from Rhodopseudomonas palustris (strain BisA53).